The following is a 187-amino-acid chain: Hypoxanthine/guanine phosphoribosyltransferase (187 aa).

Belongs to the purine/pyrimidine phosphoribosyltransferase family. Archaeal HPRT subfamily. In terms of assembly, homodimer.

It localises to the cytoplasm. It carries out the reaction IMP + diphosphate = hypoxanthine + 5-phospho-alpha-D-ribose 1-diphosphate. The catalysed reaction is GMP + diphosphate = guanine + 5-phospho-alpha-D-ribose 1-diphosphate. It functions in the pathway purine metabolism; IMP biosynthesis via salvage pathway; IMP from hypoxanthine: step 1/1. Functionally, catalyzes a salvage reaction resulting in the formation of IMP that is energically less costly than de novo synthesis. This is Hypoxanthine/guanine phosphoribosyltransferase from Methanocorpusculum labreanum (strain ATCC 43576 / DSM 4855 / Z).